Reading from the N-terminus, the 125-residue chain is MKLFTTLSASLIFIHSLGSTRAAPVTGDESSVEIPEESLIGFLDLAGDDISVFPVSNETHYGLMLVNSTIVNLARSESANFKGKREADAEPWHWLSFSKGEPMYKREADAEPWHWLSFSKGEPMY.

Positions 1 to 22 (MKLFTTLSASLIFIHSLGSTRA) are cleaved as a signal peptide. N57 and N67 each carry an N-linked (GlcNAc...) asparagine glycan.

This chain is Mating factor alpha, found in Lachancea kluyveri (Yeast).